The following is a 598-amino-acid chain: Elongation factor 4 (598 aa).

The tr-type G domain occupies 2–184 (NNIRNFAIIA…AIVAKLPAPQ (183 aa)). GTP is bound by residues 14 to 19 (DHGKST) and 131 to 134 (NKVD).

Belongs to the TRAFAC class translation factor GTPase superfamily. Classic translation factor GTPase family. LepA subfamily.

It is found in the cell membrane. The enzyme catalyses GTP + H2O = GDP + phosphate + H(+). In terms of biological role, required for accurate and efficient protein synthesis under certain stress conditions. May act as a fidelity factor of the translation reaction, by catalyzing a one-codon backward translocation of tRNAs on improperly translocated ribosomes. Back-translocation proceeds from a post-translocation (POST) complex to a pre-translocation (PRE) complex, thus giving elongation factor G a second chance to translocate the tRNAs correctly. Binds to ribosomes in a GTP-dependent manner. The sequence is that of Elongation factor 4 from Wolbachia sp. subsp. Drosophila simulans (strain wRi).